The chain runs to 482 residues: tRNA sulfurtransferase (482 aa).

In terms of domain architecture, THUMP spans 61-165 (AQYLETLACI…NDELYIISAV (105 aa)). ATP-binding positions include 183–184 (LL), Lys265, Gly287, and Gln296. A disulfide bridge connects residues Cys344 and Cys456. Residues 404–482 (LAADEVILDI…GFDNVKVYRP (79 aa)) enclose the Rhodanese domain. Catalysis depends on Cys456, which acts as the Cysteine persulfide intermediate.

Belongs to the ThiI family.

Its subcellular location is the cytoplasm. The enzyme catalyses [ThiI sulfur-carrier protein]-S-sulfanyl-L-cysteine + a uridine in tRNA + 2 reduced [2Fe-2S]-[ferredoxin] + ATP + H(+) = [ThiI sulfur-carrier protein]-L-cysteine + a 4-thiouridine in tRNA + 2 oxidized [2Fe-2S]-[ferredoxin] + AMP + diphosphate. The catalysed reaction is [ThiS sulfur-carrier protein]-C-terminal Gly-Gly-AMP + S-sulfanyl-L-cysteinyl-[cysteine desulfurase] + AH2 = [ThiS sulfur-carrier protein]-C-terminal-Gly-aminoethanethioate + L-cysteinyl-[cysteine desulfurase] + A + AMP + 2 H(+). The protein operates within cofactor biosynthesis; thiamine diphosphate biosynthesis. Its function is as follows. Catalyzes the ATP-dependent transfer of a sulfur to tRNA to produce 4-thiouridine in position 8 of tRNAs, which functions as a near-UV photosensor. Also catalyzes the transfer of sulfur to the sulfur carrier protein ThiS, forming ThiS-thiocarboxylate. This is a step in the synthesis of thiazole, in the thiamine biosynthesis pathway. The sulfur is donated as persulfide by IscS. This chain is tRNA sulfurtransferase, found in Aeromonas salmonicida (strain A449).